A 351-amino-acid polypeptide reads, in one-letter code: Maleylacetate reductase (351 aa).

The protein belongs to the iron-containing alcohol dehydrogenase family. As to quaternary structure, homodimer.

It catalyses the reaction 3-oxoadipate + NAD(+) = maleylacetate + NADH + H(+). The protein operates within aromatic compound metabolism. Involved in the gamma-resorcylate (2,6-dihydroxybenzoate) catabolism. Catalyzes the reduction of maleylacetate to 3-oxoadipate. The polypeptide is Maleylacetate reductase (Rhizobium sp. (strain MTP-10005)).